The primary structure comprises 360 residues: Fe(3+) ions import ATP-binding protein FbpC (360 aa).

The ABC transporter domain maps to 4–236 (LEIKGLHKHY…PKDRMIAEFL (233 aa)). 36–43 (GPSGCGKT) provides a ligand contact to ATP.

This sequence belongs to the ABC transporter superfamily. Fe(3+) ion importer (TC 3.A.1.10) family. In terms of assembly, the complex is composed of two ATP-binding proteins (FbpC), two transmembrane proteins (FbpB) and a solute-binding protein (FbpA).

It is found in the cell inner membrane. It catalyses the reaction Fe(3+)(out) + ATP + H2O = Fe(3+)(in) + ADP + phosphate + H(+). Functionally, part of the ABC transporter complex FbpABC involved in Fe(3+) ions import. Responsible for energy coupling to the transport system. The sequence is that of Fe(3+) ions import ATP-binding protein FbpC from Mesorhizobium japonicum (strain LMG 29417 / CECT 9101 / MAFF 303099) (Mesorhizobium loti (strain MAFF 303099)).